The chain runs to 303 residues: Tobamovirus multiplication protein 3 (303 aa).

The Extracellular segment spans residues 1–48; it reads MRIGGVEVTKFASEMMSSSSSSAVEMLNLKEASNWWSDVNESPIWQDR. Residues 49-69 traverse the membrane as a helical segment; it reads IFHVLAVLYGIVSLVAVIQLV. At 70-82 the chain is on the cytoplasmic side; that stretch reads RIQLRVPEYGWTT. Residues 83–103 form a helical membrane-spanning segment; that stretch reads QKVFHFLNFVVNGVRAVVFVF. The Extracellular segment spans residues 104-117; it reads RRNVQFMQPEILQH. The chain crosses the membrane as a helical span at residues 118–138; the sequence is ILLDIPSLAFFTTYALLVLFW. The Cytoplasmic segment spans residues 139-156; sequence AEIYYQARAVSTDGLRPS. The helical transmembrane segment at 157 to 177 threads the bilayer; sequence FFTINAVVYVVQIALWLVLWW. Residues 178–183 lie on the Extracellular side of the membrane; it reads KPVRVM. Residues 184 to 204 traverse the membrane as a helical segment; it reads VILSKMFFAGVSLFAALGFLL. Over 205 to 232 the chain is Cytoplasmic; the sequence is YGGRLFLMLQRFPVESKGRRKKLQEVGY. The chain crosses the membrane as a helical span at residues 233–253; it reads VTTICFTCFLIRCIMMCFAAF. Residues 254 to 265 are Extracellular-facing; that stretch reads DEGANLDVLDHP. Residues 266–286 traverse the membrane as a helical segment; the sequence is ILNFIYYLLVEILPSSLVLFI. Residues 287–303 lie on the Cytoplasmic side of the membrane; that stretch reads LRKLPPKRGITQYHQIR.

It belongs to the plant tobamovirus multiplication TOM1 protein family. Constituent of tobamovirus replication complex. Interacts with the helicase domain of tobamovirus-encoded replication proteins.

It localises to the vacuole membrane. Functionally, contributes to the intracellular multiplication of tobamoviruses, probably being a membrane anchor promoting the formation of the replication complex. This Arabidopsis thaliana (Mouse-ear cress) protein is Tobamovirus multiplication protein 3 (TOM3).